A 321-amino-acid polypeptide reads, in one-letter code: Glucokinase (321 aa).

8–13 (GDVGGT) is a binding site for ATP.

It belongs to the bacterial glucokinase family.

It is found in the cytoplasm. The catalysed reaction is D-glucose + ATP = D-glucose 6-phosphate + ADP + H(+). The protein is Glucokinase of Shigella flexneri serotype 5b (strain 8401).